We begin with the raw amino-acid sequence, 967 residues long: Phosphoenolpyruvate carboxylase (967 aa).

S10 is subject to Phosphoserine. Catalysis depends on residues H171 and K601. The segment at 915 to 936 is disordered; that stretch reads NASRLPLSRESPEATKPADELV. Residues 924-933 are compositionally biased toward basic and acidic residues; the sequence is ESPEATKPAD.

This sequence belongs to the PEPCase type 1 family. As to quaternary structure, homotetramer. Requires Mg(2+) as cofactor.

The protein resides in the cytoplasm. The catalysed reaction is oxaloacetate + phosphate = phosphoenolpyruvate + hydrogencarbonate. By light-reversible phosphorylation. Its function is as follows. Through the carboxylation of phosphoenolpyruvate (PEP) it forms oxaloacetate, a four-carbon dicarboxylic acid source for the tricarboxylic acid cycle. This is Phosphoenolpyruvate carboxylase from Pisum sativum (Garden pea).